A 499-amino-acid chain; its full sequence is Anaerobic nitric oxide reductase flavorubredoxin (499 aa).

Residues 30-210 are zinc metallo-hydrolase; sequence TKGTSYNSYL…PFSALVTAKI (181 aa). Fe cation is bound by residues His-79, Glu-81, Asp-83, His-147, Asp-166, and His-227. One can recognise a Flavodoxin-like domain in the interval 254 to 393; sequence ITLFYDSMSN…LCREHGQFIA (140 aa). FMN-binding positions include 260 to 264 and 342 to 369; these read SMSNN and AFGS…ETAV. Residues 447–498 form the Rubredoxin-like domain; sequence KQCMLCTVCNWVYDPEIGEPNQGVEPNTAWIDVPDYFLCPECNLGKDVFVEV. Fe cation is bound by residues Cys-452, Cys-455, Cys-485, and Cys-488.

It in the N-terminal section; belongs to the zinc metallo-hydrolase group 3 family. In terms of assembly, homotetramer. The cofactor is Fe cation. Requires FMN as cofactor.

It localises to the cytoplasm. It functions in the pathway nitrogen metabolism; nitric oxide reduction. Its function is as follows. Anaerobic nitric oxide reductase; uses NADH to detoxify nitric oxide (NO), protecting several 4Fe-4S NO-sensitive enzymes. Has at least 2 reductase partners, only one of which (NorW, flavorubredoxin reductase) has been identified. NO probably binds to the di-iron center; electrons enter from the NorW at rubredoxin and are transferred sequentially to the FMN center and the di-iron center. Also able to function as an aerobic oxygen reductase. This chain is Anaerobic nitric oxide reductase flavorubredoxin, found in Aliivibrio salmonicida (strain LFI1238) (Vibrio salmonicida (strain LFI1238)).